The sequence spans 96 residues: MRPLLVFVLMVSVSLAFSLEGMPNNGGDSVASITANQARRFKRNPLFSFAQHSLVDLKARACPYYCSSQIRCCLGFKCKDVDGTLKCVSKGDFLGK.

Positions 1-21 are cleaved as a signal peptide; sequence MRPLLVFVLMVSVSLAFSLEG. Positions 22–60 are excised as a propeptide; that stretch reads MPNNGGDSVASITANQARRFKRNPLFSFAQHSLVDLKAR.

Contains 3 disulfide bonds. As to expression, expressed by the venom duct.

The protein resides in the secreted. This Terebra anilis (Auger snail) protein is Teretoxin Tan6.14.